A 171-amino-acid chain; its full sequence is 3-hydroxydecanoyl-[acyl-carrier-protein] dehydratase (171 aa).

Residue H70 is part of the active site.

This sequence belongs to the thioester dehydratase family. FabA subfamily. In terms of assembly, homodimer.

The protein resides in the cytoplasm. The catalysed reaction is a (3R)-hydroxyacyl-[ACP] = a (2E)-enoyl-[ACP] + H2O. The enzyme catalyses (3R)-hydroxydecanoyl-[ACP] = (2E)-decenoyl-[ACP] + H2O. It carries out the reaction (2E)-decenoyl-[ACP] = (3Z)-decenoyl-[ACP]. It participates in lipid metabolism; fatty acid biosynthesis. Its function is as follows. Necessary for the introduction of cis unsaturation into fatty acids. Catalyzes the dehydration of (3R)-3-hydroxydecanoyl-ACP to E-(2)-decenoyl-ACP and then its isomerization to Z-(3)-decenoyl-ACP. Can catalyze the dehydratase reaction for beta-hydroxyacyl-ACPs with saturated chain lengths up to 16:0, being most active on intermediate chain length. The protein is 3-hydroxydecanoyl-[acyl-carrier-protein] dehydratase of Pseudomonas aeruginosa (strain LESB58).